A 493-amino-acid polypeptide reads, in one-letter code: Ketol-acid reductoisomerase (NADP(+)) (493 aa).

The region spanning Ala15–Ser208 is the KARI N-terminal Rossmann domain. NADP(+) contacts are provided by residues Cys45–Gln48, Arg68, Arg76, Ser78, and Asp108–Gln110. His132 is a catalytic residue. An NADP(+)-binding site is contributed by Gly158. KARI C-terminal knotted domains follow at residues Ser209–Ala344 and Phe345–Met486. 4 residues coordinate Mg(2+): Asp217, Glu221, Glu389, and Glu393. Residue Ser414 coordinates substrate.

Belongs to the ketol-acid reductoisomerase family. Mg(2+) serves as cofactor.

It catalyses the reaction (2R)-2,3-dihydroxy-3-methylbutanoate + NADP(+) = (2S)-2-acetolactate + NADPH + H(+). It carries out the reaction (2R,3R)-2,3-dihydroxy-3-methylpentanoate + NADP(+) = (S)-2-ethyl-2-hydroxy-3-oxobutanoate + NADPH + H(+). Its pathway is amino-acid biosynthesis; L-isoleucine biosynthesis; L-isoleucine from 2-oxobutanoate: step 2/4. It participates in amino-acid biosynthesis; L-valine biosynthesis; L-valine from pyruvate: step 2/4. Involved in the biosynthesis of branched-chain amino acids (BCAA). Catalyzes an alkyl-migration followed by a ketol-acid reduction of (S)-2-acetolactate (S2AL) to yield (R)-2,3-dihydroxy-isovalerate. In the isomerase reaction, S2AL is rearranged via a Mg-dependent methyl migration to produce 3-hydroxy-3-methyl-2-ketobutyrate (HMKB). In the reductase reaction, this 2-ketoacid undergoes a metal-dependent reduction by NADPH to yield (R)-2,3-dihydroxy-isovalerate. In Aeromonas salmonicida (strain A449), this protein is Ketol-acid reductoisomerase (NADP(+)).